A 228-amino-acid polypeptide reads, in one-letter code: Protein K8.1 (228 aa).

A signal peptide spans 1–26 (MSSTQIRTEIPVALLILCLCLVACHA). N-linked (GlcNAc...) asparagine; by host glycosylation is found at N55, N60, N70, and N85. The tract at residues 77–113 (GSPSSEYPNVSVSVEDTSASGSGEDAIDESGSGEEER) is disordered. The segment covering 78–97 (SPSSEYPNVSVSVEDTSASG) has biased composition (polar residues). The helical transmembrane segment at 197–217 (LYILWAVGLLLGLVLILYLCV) threads the bilayer.

It localises to the host membrane. The protein is Protein K8.1 (K8.1) of Human herpesvirus 8 type P (isolate GK18) (HHV-8).